The primary structure comprises 850 residues: Protein SEY1 (850 aa).

The segment at 1-27 (MSDLPPPDLGSEEISVSPTSSSSSFVP) is disordered. Residues 1–741 (MSDLPPPDLG…KRALIQHVTH (741 aa)) are Cytoplasmic-facing. A compositionally biased stretch (low complexity) spans 12–27 (EEISVSPTSSSSSFVP). A GB1/RHD3-type G domain is found at 64 to 297 (NNNYHIVSVF…NEDFLFKKYY (234 aa)). 74–81 (GSQSTGKS) contributes to the GTP binding site. A helical transmembrane segment spans residues 742–762 (IPYYIYIVILVLGWNEFMAVL). Residues 763–765 (RNP) lie on the Lumenal side of the membrane. A helical transmembrane segment spans residues 766-786 (FFFTLLLMLGAGTYVLYHLNL). At 787–850 (LKPAMVVVQR…SDLTPPGEGS (64 aa)) the chain is on the cytoplasmic side. Positions 816 to 850 (QPQEHAKRLSKMAGITEDKPEEIEMSDLTPPGEGS) are disordered.

Belongs to the TRAFAC class dynamin-like GTPase superfamily. GB1/RHD3 GTPase family. RHD3 subfamily.

It is found in the endoplasmic reticulum membrane. Cooperates with the reticulon proteins and tubule-shaping DP1 family proteins to generate and maintain the structure of the tubular endoplasmic reticulum network. Has GTPase activity, which is required for its function in ER organization. This Meyerozyma guilliermondii (strain ATCC 6260 / CBS 566 / DSM 6381 / JCM 1539 / NBRC 10279 / NRRL Y-324) (Yeast) protein is Protein SEY1.